The primary structure comprises 671 residues: Huntingtin-associated protein 1 (671 aa).

2 disordered regions span residues 1–83 and 258–289; these read MRPK…ARRP and DSDEEDEDEEEEEEEKEAEEEQEEEEAEEDLQ. Positions 20 to 29 are enriched in low complexity; the sequence is PAALTCAPSP. In terms of domain architecture, HAP1 N-terminal spans 106–461; that stretch reads RFVFQGPFGS…EEVKTLRQQP (356 aa). Residues 212 to 427 adopt a coiled-coil conformation; that stretch reads QSLVKQNSVL…IQMQLQEESV (216 aa). Residues 258 to 288 show a composition bias toward acidic residues; that stretch reads DSDEEDEDEEEEEEEKEAEEEQEEEEAEEDL.

Self-associates. Interacts with HTT/huntingtin; enhanced by an expanded polyglutamine repeat within HTT. Interacts with DCTN1; decreased in presence of HTT with expanded polyglutamine repeat. Interacts with KLC2. Interacts with ITPR1 and APP. Interacts with AR; decreased by an expanded polyglutamine repeat within AR. Interacts with YWHAZ. Interacts with BDNF and SORT1; probably forming a complex involved in proBDNF trafficking, degradation and processing. Interacts with TBP, AHI1, HGS and KALRN. Interacts with KIF5A, KIF5B, KIF5C and GABRB3; indicative for an HAP1:KIF5 complex transporting a GABA(A) receptor as cargo. Interacts with ATXN3; in STBs with ATXN3 poly-Gln region with 27 repeats (normal population) and 79 repeats (spinocerebellar ataxia 3 (SCA3) patients) associating in the same strength. Interacts with NTRK2; HAP1 stabilizes association of NTRK2 with SORT1 preventing NTRK2 degradation. Interacts with CFAP263. As to expression, predominantly expressed in brain. Selectively expressed in neurons.

It localises to the cytoplasm. The protein localises to the cell projection. Its subcellular location is the axon. The protein resides in the presynapse. It is found in the cytoskeleton. It localises to the dendritic spine. The protein localises to the dendrite. Its subcellular location is the lysosome. The protein resides in the endoplasmic reticulum. It is found in the mitochondrion. It localises to the nucleus. The protein localises to the cytoplasmic vesicle. Its subcellular location is the autophagosome. The protein resides in the early endosome. It is found in the growth cone. It localises to the neuron projection. The protein localises to the secretory vesicle. Its subcellular location is the synaptic vesicle. Functionally, originally identified as neuronal protein that specifically associates with HTT/huntingtin and the binding is enhanced by an expanded polyglutamine repeat within HTT possibly affecting HAP1 interaction properties. Both HTT and HAP1 are involved in intracellular trafficking and HAP1 is proposed to link HTT to motor proteins and/or transport cargos. Seems to play a role in vesicular transport within neurons and axons such as from early endosomes to late endocytic compartments and to promote neurite outgrowth. The vesicular transport function via association with microtubule-dependent transporters can be attenuated by association with mutant HTT. Involved in the axonal transport of BDNF and its activity-dependent secretion; the function seems to involve HTT, DCTN1 and a complex with SORT1. Involved in APP trafficking and seems to facilitate APP anterograde transport and membrane insertion thereby possibly reducing processing into amyloid beta. Involved in delivery of gamma-aminobutyric acid (GABA(A)) receptors to synapses; the function is dependent on kinesin motor protein KIF5 and is disrupted by HTT with expanded polyglutamine repeat. Involved in regulation of autophagosome motility by promoting efficient retrograde axonal transport. Seems to be involved in regulation of membrane receptor recycling and degradation, and respective signal transduction, including GABA(A) receptors, tyrosine kinase receptors, EGFR, IP3 receptor and androgen receptor. Among others suggested to be involved in control of feeding behavior (involving hypothalamic GABA(A) receptors), cerebellar and brainstem development (involving AHI1 and NTRK1/TrkA), postnatal neurogenesis (involving hypothalamic NTRK2/TrkB), and ITPR1/InsP3R1-mediated Ca(2+) release (involving HTT and possibly the effect of mutant HTT). Via association with DCTN1/dynactin p150-glued and HTT/huntingtin involved in cytoplasmic retention of REST in neurons. May be involved in ciliogenesis. Involved in regulation of exocytosis. Seems to be involved in formation of cytoplasmic inclusion bodies (STBs). In case of anomalous expression of TBP, can sequester a subset of TBP into STBs; sequestration is enhanced by an expanded polyglutamine repeat within TBP. HAP1-containing STBs have been proposed to play a protective role against neurodegeneration in Huntigton disease (HD) and spinocerebellar ataxia 17 (SCA17). This Homo sapiens (Human) protein is Huntingtin-associated protein 1 (HAP1).